The following is a 407-amino-acid chain: NADH-quinone oxidoreductase subunit D (407 aa).

This sequence belongs to the complex I 49 kDa subunit family. NDH-1 is composed of 14 different subunits. Subunits NuoB, C, D, E, F, and G constitute the peripheral sector of the complex.

The protein localises to the cell inner membrane. It catalyses the reaction a quinone + NADH + 5 H(+)(in) = a quinol + NAD(+) + 4 H(+)(out). Its function is as follows. NDH-1 shuttles electrons from NADH, via FMN and iron-sulfur (Fe-S) centers, to quinones in the respiratory chain. The immediate electron acceptor for the enzyme in this species is believed to be ubiquinone. Couples the redox reaction to proton translocation (for every two electrons transferred, four hydrogen ions are translocated across the cytoplasmic membrane), and thus conserves the redox energy in a proton gradient. The chain is NADH-quinone oxidoreductase subunit D from Roseobacter denitrificans (strain ATCC 33942 / OCh 114) (Erythrobacter sp. (strain OCh 114)).